The chain runs to 147 residues: 3-hydroxyacyl-[acyl-carrier-protein] dehydratase FabZ (147 aa).

His53 is a catalytic residue.

It belongs to the thioester dehydratase family. FabZ subfamily.

It is found in the cytoplasm. It carries out the reaction a (3R)-hydroxyacyl-[ACP] = a (2E)-enoyl-[ACP] + H2O. Functionally, involved in unsaturated fatty acids biosynthesis. Catalyzes the dehydration of short chain beta-hydroxyacyl-ACPs and long chain saturated and unsaturated beta-hydroxyacyl-ACPs. The protein is 3-hydroxyacyl-[acyl-carrier-protein] dehydratase FabZ of Synechococcus sp. (strain WH7803).